The sequence spans 279 residues: Tryptophan 2,3-dioxygenase (279 aa).

Substrate is bound by residues 48–52, Y110, and R114; that span reads FIVIH. H237 contributes to the heme binding site. T251 contributes to the substrate binding site.

Belongs to the tryptophan 2,3-dioxygenase family. As to quaternary structure, homotetramer. Heme is required as a cofactor.

The catalysed reaction is L-tryptophan + O2 = N-formyl-L-kynurenine. It functions in the pathway amino-acid degradation; L-tryptophan degradation via kynurenine pathway; L-kynurenine from L-tryptophan: step 1/2. Its function is as follows. Heme-dependent dioxygenase that catalyzes the oxidative cleavage of the L-tryptophan (L-Trp) pyrrole ring and converts L-tryptophan to N-formyl-L-kynurenine. Catalyzes the oxidative cleavage of the indole moiety. The protein is Tryptophan 2,3-dioxygenase of Bacillus cereus (strain ATCC 10987 / NRS 248).